Reading from the N-terminus, the 435-residue chain is UDP-N-acetylmuramoylalanine--D-glutamate ligase (435 aa).

114-120 (GSNGKST) is a binding site for ATP.

The protein belongs to the MurCDEF family.

The protein localises to the cytoplasm. The enzyme catalyses UDP-N-acetyl-alpha-D-muramoyl-L-alanine + D-glutamate + ATP = UDP-N-acetyl-alpha-D-muramoyl-L-alanyl-D-glutamate + ADP + phosphate + H(+). The protein operates within cell wall biogenesis; peptidoglycan biosynthesis. Its function is as follows. Cell wall formation. Catalyzes the addition of glutamate to the nucleotide precursor UDP-N-acetylmuramoyl-L-alanine (UMA). This Haemophilus ducreyi (strain 35000HP / ATCC 700724) protein is UDP-N-acetylmuramoylalanine--D-glutamate ligase.